The primary structure comprises 313 residues: MPVKIPDHLPAAGILESENIFVMSETRAANQDIRPMKVLILNLMPNKIETETQLLRLLGNTPLQVDVDLLRIHDKESKHTSIDHMNTFYRDFEDVRHKNYDGLIITGAPLGQIDFEEVTYWDHIREIIDWSQQHVTSVLFLCWAAHAGLYHLYGLNRKILQQKRSGVFVHRRTCQHFPLLRGFDDEFFAPHSRFAEMDIEELKQHSELQVLAQSDEAGAYLVLSRNNRNLFVMGHPEYQKSTLNDEYHRDLAQGLNPNVPQNYYRNDDPKDDAIARWHSHGSLLVSNWLNYYVYQLTPYDLSDMSAVTPWESQ.

Cys-142 acts as the Acyl-thioester intermediate in catalysis. Substrate is bound by residues Lys-163 and Ser-192. Residue His-235 is the Proton acceptor of the active site. The active site involves Glu-237. Residue Arg-249 coordinates substrate.

It belongs to the MetA family.

It is found in the cytoplasm. The catalysed reaction is L-homoserine + succinyl-CoA = O-succinyl-L-homoserine + CoA. Its pathway is amino-acid biosynthesis; L-methionine biosynthesis via de novo pathway; O-succinyl-L-homoserine from L-homoserine: step 1/1. Its function is as follows. Transfers a succinyl group from succinyl-CoA to L-homoserine, forming succinyl-L-homoserine. In Shewanella sp. (strain ANA-3), this protein is Homoserine O-succinyltransferase.